Consider the following 562-residue polypeptide: Nucleoprotein (562 aa).

The interval 53–238 (MRRERRDDND…ITQEESQINI (186 aa)) is binding site for the cap structure m7GTP. Residues aspartate 381 and glutamate 383 each coordinate Mn(2+). 4 residues coordinate Zn(2+): glutamate 391, cysteine 498, histidine 501, and cysteine 522. Position 526 (aspartate 526) interacts with Mn(2+).

This sequence belongs to the arenaviridae nucleocapsid protein family. Homomultimerizes to form the nucleocapsid. Binds to viral genomic RNA. Interacts with glycoprotein G2. Interacts with protein Z; this interaction probably directs the encapsidated genome to budding sites. Interacts with protein L; this interaction does not interfere with Z-L interaction. Interacts with host IKBKE (via Protein kinase domain); the interaction inhibits IKBKE kinase activity.

Its subcellular location is the virion. It is found in the host cytoplasm. Encapsidates the genome, protecting it from nucleases. The encapsidated genomic RNA is termed the nucleocapsid (NC). Serves as template for viral transcription and replication. The increased presence of protein N in host cell does not seem to trigger the switch from transcription to replication as observed in other negative strain RNA viruses. Through the interaction with host IKBKE, strongly inhibits the phosphorylation and nuclear translocation of host IRF3, a protein involved in interferon activation pathway, leading to the inhibition of interferon-beta and IRF3-dependent promoters activation. Also encodes a functional 3'-5' exoribonuclease that degrades preferentially dsRNA substrates and thereby participates in the suppression of interferon induction. The sequence is that of Nucleoprotein from Tamiami mammarenavirus (isolate Rat/United States/W 10777/1964) (TAMV).